Here is a 332-residue protein sequence, read N- to C-terminus: L-lactate dehydrogenase A chain (332 aa).

NAD(+)-binding positions include Gly-29–Lys-57 and Arg-99. Substrate contacts are provided by Arg-106, Asn-138, and Arg-169. An NAD(+)-binding site is contributed by Asn-138. His-193 (proton acceptor) is an active-site residue. A substrate-binding site is contributed by Thr-248.

Belongs to the LDH/MDH superfamily. LDH family. In terms of assembly, homotetramer.

It localises to the cytoplasm. The enzyme catalyses (S)-lactate + NAD(+) = pyruvate + NADH + H(+). It participates in fermentation; pyruvate fermentation to lactate; (S)-lactate from pyruvate: step 1/1. In terms of biological role, interconverts simultaneously and stereospecifically pyruvate and lactate with concomitant interconversion of NADH and NAD(+). The protein is L-lactate dehydrogenase A chain (LDHA) of Columba livia (Rock dove).